Here is a 267-residue protein sequence, read N- to C-terminus: Undecaprenyl-diphosphatase (267 aa).

The next 7 membrane-spanning stretches (helical) occupy residues 7–29 (LILG…HMIL), 41–61 (FWKS…IFVF), 69–89 (LDIW…GLFV), 96–116 (LFNG…FILI), 173–193 (AAEF…AYSI), 207–227 (IPLG…IKFF), and 239–259 (FGIY…SGIL).

It belongs to the UppP family.

Its subcellular location is the cell inner membrane. It catalyses the reaction di-trans,octa-cis-undecaprenyl diphosphate + H2O = di-trans,octa-cis-undecaprenyl phosphate + phosphate + H(+). In terms of biological role, catalyzes the dephosphorylation of undecaprenyl diphosphate (UPP). Confers resistance to bacitracin. The sequence is that of Undecaprenyl-diphosphatase from Campylobacter jejuni subsp. jejuni serotype O:6 (strain 81116 / NCTC 11828).